Reading from the N-terminus, the 139-residue chain is Large ribosomal subunit protein uL16 (139 aa).

The protein belongs to the universal ribosomal protein uL16 family. In terms of assembly, part of the 50S ribosomal subunit.

Functionally, binds 23S rRNA and is also seen to make contacts with the A and possibly P site tRNAs. The sequence is that of Large ribosomal subunit protein uL16 from Crocosphaera subtropica (strain ATCC 51142 / BH68) (Cyanothece sp. (strain ATCC 51142)).